Here is an 893-residue protein sequence, read N- to C-terminus: MSVTTQQPAVVPLPSSPRLPIESHAGPRSTQLPPSPPETVNGDDPKSITSTPAEPDFPLPPPANPKPQVLDIDKPTPDAHVPRDPRLIRLTGVHPFNTEPPLTDLYNEGFLTSPELFYVRNHGAVPEVQDEECLDWEFSIEGMVANPLKITLRQLLEEYENVTYPVTLVCAGNRRKEQNVVRKSKGFAWGAAGVSTALFTGVVMKDVIERAKPLRKAKYVCMEGADKLPNGYYGTSVKLNWVMDPNRGIMLAHKMNGENLSLDHGKPLRAVVPGQIGGRSVKWLKKLIVTAEPSDNWYHIYDNRVLPTMVDPDEAAKNPKWWMDERYAIYDLSPNSAIAFPAHEEKVVLASAENSYNVRGYAYSGGGRRITRCEVSLNKGKNWRLANIDYAEDKYRDFEGRELFGARLDMDWRETSFCWCFWNLDIATAELRDANDILVRAMDEAMCIQPRDMYWSVLGMMNNPWYRITIHHEGDVLRFEHPTQPALIPGGWMERVKKAGGNLTNGQWGEQIEGQELENTAVEEVKEIKMTKDGVNRIVELDELKWHESAEYPWFVVNDEVYDGTSFLEGHPGGAQSIISAAGLDASDEFMAIHSETAKAMMPAYHIGTLSPTASKQLSLEEPTSKQASSSSLRPTFLDSRTWSKALLSSKTKVSWDTRIFRFKLDHASQTLGLPTGQHLMIRLRDPVTREAIIRSYTPISQISEQGFCDVLIKIYADAPGREGGKMTKALDSIPCGHWVDMKGPIGKFEYLGKGVCSINGNERRVRSMKMICGGSGITPIYQVLRAILQDSADSTHCTVLNGNRLEEDILCREDLDRFAEENGERCTLVHTLTQAAEGWTGRRGRIGEELLKEFCGTEEDGLVLVCGPEGLERSVKGLLSGMAWRDDDVIFF.

Positions 1–83 (MSVTTQQPAV…KPTPDAHVPR (83 aa)) are disordered. The segment covering 55-65 (PDFPLPPPANP) has biased composition (pro residues). Positions 71-83 (DIDKPTPDAHVPR) are enriched in basic and acidic residues. Residue Cys-170 coordinates Mo-molybdopterin. Residues 536–611 (NRIVELDELK…MPAYHIGTLS (76 aa)) form the Cytochrome b5 heme-binding domain. Heme is bound by residues His-571 and His-594. In terms of domain architecture, FAD-binding FR-type spans 641–752 (RTWSKALLSS…KGPIGKFEYL (112 aa)). Residues 695–698 (RSYT), 712–716 (LIKIY), 726–728 (KMT), Ser-776, and Thr-779 contribute to the FAD site. NADP(+) is bound at residue 863–872 (LVLVCGPEGL).

This sequence belongs to the nitrate reductase family. In terms of assembly, homodimer. FAD serves as cofactor. It depends on heme as a cofactor. Mo-molybdopterin is required as a cofactor.

The catalysed reaction is nitrite + NADP(+) + H2O = nitrate + NADPH + H(+). Nitrate reductase is a key enzyme involved in the first step of nitrate assimilation in plants, fungi and bacteria. The sequence is that of Nitrate reductase [NADPH] (NIAD) from Leptosphaeria maculans (Blackleg fungus).